The sequence spans 471 residues: Putative multidrug resistance protein MdtD (471 aa).

The Periplasmic portion of the chain corresponds to 1–11 (MTDLPDSTRWQ). The chain crosses the membrane as a helical span at residues 12–32 (LWIVAFGFFMQSLDTTIVNTA). Topologically, residues 33-48 (LPSMAQSLGESPLHMH) are cytoplasmic. The chain crosses the membrane as a helical span at residues 49–69 (MVIVSYVLTVAVMLPASGWLA). The Periplasmic portion of the chain corresponds to 70-76 (DKVGVRN). The helical transmembrane segment at 77-97 (IFFTAIVLFTLGSLFCALSGT) threads the bilayer. At 98-101 (LNEL) the chain is on the cytoplasmic side. Residues 102-124 (LLARALQGVGGAMMVPVGRLTVM) form a helical membrane-spanning segment. Residues 125 to 137 (KIVPREQYMAAMT) lie on the Periplasmic side of the membrane. A helical membrane pass occupies residues 138–158 (FVTLPGQVGPLLGPALGGLLV). Topologically, residues 159–164 (EYASWH) are cytoplasmic. The helical transmembrane segment at 165–185 (WIFLINIPVGIIGAIATLMLM) threads the bilayer. Topologically, residues 186–196 (PNYTMQTRRFD) are periplasmic. The helical transmembrane segment at 197–217 (LSGFLLLAVGMAVLTLALDGS) threads the bilayer. At 218-224 (KGTGLSP) the chain is on the cytoplasmic side. The chain crosses the membrane as a helical span at residues 225–245 (LAIAGLVAVGVVALVLYLLHA). Topologically, residues 246–262 (RNNNRALFSLKLFRTRT) are periplasmic. The helical transmembrane segment at 263-283 (FSLGLAGSFAGRIGSGMLPFM) threads the bilayer. The Cytoplasmic portion of the chain corresponds to 284–285 (TP). The chain crosses the membrane as a helical span at residues 286 to 306 (VFLQIGLGFSPFHAGLMMIPM). Topologically, residues 307–341 (VLGSMGMKRIVVQVVNRFGYRRVLVATTLGLSLVT) are periplasmic. A helical transmembrane segment spans residues 342–362 (LLFMTTALLGWYYVLPFVLFL). Topologically, residues 363–395 (QGMVNSTRFSSMNTLTLKDLPDNLASSGNSLLS) are cytoplasmic. Residues 396–416 (MIMQLSMSIGVTIAGLLLGLF) traverse the membrane as a helical segment. Over 417 to 430 (GSQHVSVDSGTTQT) the chain is Periplasmic. A helical membrane pass occupies residues 431–451 (VFMYTWLSMAFIIALPAFIFA). Topologically, residues 452–471 (RVPNDTHQNVAISRRKRSAQ) are cytoplasmic.

It belongs to the major facilitator superfamily. TCR/Tet family.

The protein localises to the cell inner membrane. The polypeptide is Putative multidrug resistance protein MdtD (Escherichia coli (strain SMS-3-5 / SECEC)).